The sequence spans 657 residues: DNA-directed RNA polymerase III subunit RPC3 (657 aa).

The segment at 390–450 (HSNQSLKRKQ…LDLDEDDSDP (61 aa)) is disordered. The segment covering 428–448 (EESEEENEEGDANLDLDEDDS) has biased composition (acidic residues). A leucine-zipper region spans residues 584–605 (LTWNLARLISKLETLKEENATL).

Belongs to the RNA polymerase beta chain family. Component of the RNA polymerase III (Pol III) complex consisting of 17 subunits.

Its subcellular location is the nucleus. Its function is as follows. DNA-dependent RNA polymerase catalyzes the transcription of DNA into RNA using the four ribonucleoside triphosphates as substrates. Specific core component of RNA polymerase III which synthesizes small RNAs, such as 5S rRNA and tRNAs. This Kluyveromyces lactis (strain ATCC 8585 / CBS 2359 / DSM 70799 / NBRC 1267 / NRRL Y-1140 / WM37) (Yeast) protein is DNA-directed RNA polymerase III subunit RPC3 (RPC82).